Here is a 218-residue protein sequence, read N- to C-terminus: Ribose-5-phosphate isomerase A (218 aa).

Substrate contacts are provided by residues 28-31 (TGST), 81-84 (DGAD), and 94-97 (KGGG). Glutamate 103 functions as the Proton acceptor in the catalytic mechanism. Lysine 121 lines the substrate pocket.

It belongs to the ribose 5-phosphate isomerase family. In terms of assembly, homodimer.

The enzyme catalyses aldehydo-D-ribose 5-phosphate = D-ribulose 5-phosphate. It participates in carbohydrate degradation; pentose phosphate pathway; D-ribose 5-phosphate from D-ribulose 5-phosphate (non-oxidative stage): step 1/1. Functionally, catalyzes the reversible conversion of ribose-5-phosphate to ribulose 5-phosphate. This chain is Ribose-5-phosphate isomerase A, found in Aliivibrio salmonicida (strain LFI1238) (Vibrio salmonicida (strain LFI1238)).